Here is a 7839-residue protein sequence, read N- to C-terminus: Nonribosomal peptide synthetase GRA1 (7839 aa).

The segment covering 1–23 (MALLNGKSTLPNGHNSSIESPNG) has biased composition (polar residues). A disordered region spans residues 1–26 (MALLNGKSTLPNGHNSSIESPNGYTE). An adenylation 1 region spans residues 264 to 650 (LASPNSCAVH…LGRIDDQVKI (387 aa)). The 74-residue stretch at 793 to 866 (SAEALVLRQL…LQAEMSEKKK (74 aa)) folds into the Carrier 1 domain. Position 827 is an O-(pantetheine 4'-phosphoryl)serine (Ser827). Residues 916–1332 (DIYPASPLQE…ILSPSDVAQI (417 aa)) form a condensation 1 region. The adenylation 2 stretch occupies residues 1351-1742 (FFTQVKRSPD…QRKDAQLKIR (392 aa)). The region spanning 1880 to 1957 (ELETEAERTM…AMSRQATVSD (78 aa)) is the Carrier 2 domain. O-(pantetheine 4'-phosphoryl)serine is present on Ser1918. Residues 1997-2413 (DLYPCTPFQE…LISPSDMETI (417 aa)) are condensation 2. The adenylation 3 stretch occupies residues 2432–2828 (FDRRLSQKHS…GRRDTQLKIR (397 aa)). Positions 2963-3040 (IPTTQMEWNL…DLAQAIVLDT (78 aa)) constitute a Carrier 3 domain. At Ser3001 the chain carries O-(pantetheine 4'-phosphoryl)serine. A condensation 3 region spans residues 3084-3496 (DIYPCTPLQD…QVDLISDSDH (413 aa)). The segment at 3520-3923 (RLAVSNPDAE…GRRDSQVKLR (404 aa)) is adenylation 4. The Carrier 4 domain occupies 4057–4134 (RPLTEREKDL…DMAAMTTSLS (78 aa)). The residue at position 4095 (Ser4095) is an O-(pantetheine 4'-phosphoryl)serine. The segment at 4234–4569 (NLEEFVGRQS…MMNPDDAEEI (336 aa)) is condensation 4. The tract at residues 4591–4982 (HSKGCPDRIA…VSRKDTQVKF (392 aa)) is adenylation 5. Residues 5113–5189 (ALSSDEESQL…DMALCMTSAQ (77 aa)) form the Carrier 5 domain. Residue Ser5150 is modified to O-(pantetheine 4'-phosphoryl)serine. The tract at residues 5224-5653 (EDIYPCSALQ…VSPSDQAEIL (430 aa)) is condensation 5. The tract at residues 5671-6069 (FESRARLQPS…GRRDTQVKLR (399 aa)) is adenylation 6. The 76-residue stretch at 6207-6282 (FPSSLAEQQM…HMAAIATTFT (76 aa)) folds into the Carrier 6 domain. An O-(pantetheine 4'-phosphoryl)serine modification is found at Ser6243. The condensation 6 stretch occupies residues 6321–6730 (QDIYPCSALQ…RLADMDLTGP (410 aa)). The tract at residues 6756-7147 (EQRVKSQPDS…LGRKDSQIKL (392 aa)) is adenylation 7. One can recognise a Carrier 7 domain in the interval 7290-7366 (KAATPNEKTL…DLARVSRQSI (77 aa)). Residue Ser7327 is modified to O-(pantetheine 4'-phosphoryl)serine. The interval 7404 to 7704 (HDIYPCTQVQ…LDYAKKRASS (301 aa)) is condensation7.

It belongs to the NRP synthetase family.

Its pathway is mycotoxin biosynthesis. In terms of biological role, nonribosomal peptide synthetase; part of the gene cluster that mediates the biosynthesis of gramillins A and B, bicyclic lipopeptides that induce cell death in maize leaves but not in wheat leaves. The nonribosomal peptide synthetase GRA1 incorporates respectively a glutamic adic (Glu), a leucine (Leu), a serine (Ser), a hydroxyglutamine (HOGln), a 2-amino decanoic acid, and 2 cysteins (CysB and CysA). The biosynthesis of 2-amino decanoic acid incorporated in gramillins could be initiated by a fatty acid synthase composed of the alpha and beta subunits FGSG_00036 and FGSG_11656. The cytochrome P450 monooxygenase FGSG_15680 could hydroxylate the fatty acid chain. Subsequent oxidation to the ketone by the oxidoreductase FGSG_00048 and transamination by aminotransferase FGSG_00049 could form 2-amino-decanoic acid. On the other hand, FGSG_15680 could also be responsible for the HO-modified glutamine at the gamma-position. Whether hydroxylation occurs on the fully assembled product or on the Gln residue prior to assembly into the gramillins requires further proof. The thioredoxin FGSG_00043 could also be required for the disulfide-bond formation between CysA and CysB. The specific involvement of the remaining proteins from the cluster is more difficult to discern, but could have broader regulatory (FGSG_00040 and FGSG_11657) or enzymatic functions (FGSG_00044 and FGSG_00045). The final C-domain of GRA1 does not possess the expected sequence of a termination CT domain, often implicated in macrocyclization and release of a cyclopeptidein fungal NRPs; and the thioesterase FGSG_00047 may act in concert with the terminal C-domain of GRA1 to catalyze the formation of the macrocyclic anhydride and release of the products. This chain is Nonribosomal peptide synthetase GRA1, found in Gibberella zeae (strain ATCC MYA-4620 / CBS 123657 / FGSC 9075 / NRRL 31084 / PH-1) (Wheat head blight fungus).